Reading from the N-terminus, the 950-residue chain is Coiled-coil domain-containing protein 80 (950 aa).

Positions 1-21 are cleaved as a signal peptide; sequence MTWRMGPRFTMLLAMWLVCGS. 3 disordered regions span residues 28–64, 88–119, and 289–609; these read TIRG…IERS, PTEP…EMIR, and QVVA…QSPK. 2 stretches are compositionally biased toward basic and acidic residues: residues 104-119 and 308-317; these read PEQR…EMIR and SEKKKEDPRR. Over residues 348–374 the composition is skewed to low complexity; it reads PRATTLPPAPATTVTRSTSRAVTVAAR. Over residues 376-385 the composition is skewed to polar residues; the sequence is MTTTAFPTTQ. Residues 418–428 are compositionally biased toward basic and acidic residues; it reads SRKDQHRERPQ. Over residues 435–454 the composition is skewed to polar residues; it reads KATSLESFTNAPPTTISEPS. 3 stretches are compositionally biased toward basic and acidic residues: residues 462–478, 487–499, and 538–582; these read RFRD…HRDP, PAKE…KAQD, and KKHE…EKEK. Residues lysine 545 and lysine 548 each participate in a glycyl lysine isopeptide (Lys-Gly) (interchain with G-Cter in SUMO2) cross-link. A coiled-coil region spans residues 560–587; it reads DKLLKSEKQMKKSEKKSKQEKEKSKKKK. A compositionally biased stretch (polar residues) spans 598 to 609; sequence KPTNKHFTQSPK.

Belongs to the CCDC80 family. In terms of assembly, binds to various extracellular matrix proteins. Phosphorylated. Expressed in dermal papilla and dermal fibroblasts (at protein level). Expressed in heart, thymus, placenta, pancreas, colon, epithelium, spleen and osteoblasts.

The protein localises to the secreted. The protein resides in the extracellular space. It localises to the extracellular matrix. In terms of biological role, promotes cell adhesion and matrix assembly. This is Coiled-coil domain-containing protein 80 (CCDC80) from Homo sapiens (Human).